Consider the following 726-residue polypeptide: Bromodomain-containing protein 3 (726 aa).

A disordered region spans residues 1-35 (MSTATTVAPAGIPATPGPVNPPPPEVSNPSKPGRK). Serine 2 carries the post-translational modification N-acetylserine. Positions 15–26 (TPGPVNPPPPEV) are enriched in pro residues. A Bromo 1 domain is found at 34-140 (RKTNQLQYMQ…KIFLQKVAQM (107 aa)). The acetylated histone H3 binding stretch occupies residues 78 to 80 (KNP). 2 disordered regions span residues 149–169 (PPAP…AGTQ) and 237–305 (VKKK…AGKK). A compositionally biased stretch (low complexity) spans 248–261 (TTTPTTSAITASRS). Phosphoserine occurs at positions 263 and 281. The Bromo 2 domain maps to 306–415 (GKLSEHLRYC…DVFEMRFAKM (110 aa)). Lysine 414 participates in a covalent cross-link: Glycyl lysine isopeptide (Lys-Gly) (interchain with G-Cter in SUMO2). Disordered regions lie at residues 421–462 (EAPA…RATR), 477–575 (LAAL…MSYD), and 637–726 (LQKK…SDSE). Residues 453-524 (SDSEEERATR…AEEEKKAKVA (72 aa)) are a coiled coil. Positions 487-503 (KPKKKKEKKEKEKKKKD) are enriched in basic residues. Positions 504–521 (KEKEKEKHKVKAEEEKKA) are enriched in basic and acidic residues. The span at 523–540 (VAPPAKQAQQKKAPAKKA) shows a compositional bias: low complexity. Positions 562-644 (DSEEEEEGLP…SCLQKKQRKP (83 aa)) constitute an NET domain. Serine 563 carries the phosphoserine modification. A coiled-coil region spans residues 645–684 (FSASGKKQAAKSKEELAQEKKKELEKRLQDVSGQLSSSKK). Over residues 655–673 (KSKEELAQEKKKELEKRLQ) the composition is skewed to basic and acidic residues. The segment covering 692 to 726 (GSAPSGGPSRLSSSSSSESGSSSSSGSSSDSSDSE) has biased composition (low complexity).

It belongs to the BET family. Interacts (via bromo domain 1) with GATA1 acetylated at 'Lys-312' and 'Lys-315'. Interacts (via bromo domain 1) with GATA2 acetylated on lysine residues. Interacts (via NET domain) with CHD4 (via KIKL motif). Interacts (via NET domain) with SMARCA4 (via KIKL motif). Interacts (via NET domain) with NSD3 (via KIKL motif). In terms of assembly, (Microbial infection) Interacts with the Integrase protein of Moloney murine leukemia virus (MLV). In terms of tissue distribution, ubiquitous.

The protein resides in the nucleus. It is found in the chromosome. Inhibited by JQ1, a thieno-triazolo-1,4-diazepine derivative, which specifically inhibits members of the BET family (BRD2, BRD3 and BRD4). The first bromo domain is inhibited by GSK778 (iBET-BD1), which specifically inhibits the first bromo domain of members of the BET family (BRD2, BRD3 and BRD4). The second bromo domain is inhibited by ABBV-744, which specifically inhibits the second bromo domain of members of the BET family (BRD2, BRD3 and BRD4). The second bromo domain is inhibited by GSK046 (iBET-BD2), which specifically inhibits the second bromo domain of members of the BET family (BRD2, BRD3 and BRD4). Functionally, chromatin reader that recognizes and binds acetylated histones, thereby controlling gene expression and remodeling chromatin structures. Recruits transcription factors and coactivators to target gene sites, and activates RNA polymerase II machinery for transcriptional elongation. In vitro, binds acetylated lysine residues on the N-terminus of histone H2A, H2B, H3 and H4. Involved in endoderm differentiation via its association with long non-coding RNA (lncRNA) DIGIT: BRD3 undergoes liquid-liquid phase separation upon binding to lncRNA DIGIT, promoting binding to histone H3 acetylated at 'Lys-18' (H3K18ac) to induce endoderm gene expression. Also binds non-histones acetylated proteins, such as GATA1 and GATA2: regulates transcription by promoting the binding of the transcription factor GATA1 to its targets. The sequence is that of Bromodomain-containing protein 3 from Homo sapiens (Human).